A 210-amino-acid chain; its full sequence is 23 kDa jasmonate-induced protein (210 aa).

It belongs to the jasmonate-induced protein family.

This chain is 23 kDa jasmonate-induced protein, found in Hordeum vulgare (Barley).